Here is a 107-residue protein sequence, read N- to C-terminus: Integration host factor subunit beta (107 aa).

The interval 55 to 107 (RRPARVGRNPKSGEKVQVPEKHVPHFKPGKELRERVDGRAGEPLKNDEPEDAQ) is disordered. Residues 65-101 (KSGEKVQVPEKHVPHFKPGKELRERVDGRAGEPLKND) are compositionally biased toward basic and acidic residues.

This sequence belongs to the bacterial histone-like protein family. In terms of assembly, heterodimer of an alpha and a beta chain.

This protein is one of the two subunits of integration host factor, a specific DNA-binding protein that functions in genetic recombination as well as in transcriptional and translational control. The chain is Integration host factor subunit beta from Burkholderia pseudomallei (strain K96243).